An 888-amino-acid polypeptide reads, in one-letter code: Collagen alpha chain (888 aa).

The tract at residues 1–627 (APGPDGLTGT…GPPGQPGMSE (627 aa)) is disordered. The Collagen-like 1 domain maps to 3 to 60 (GPDGLTGTKGSMGEPGTDGEPGSPGPQGAKGETGLAGRRGLTGIPGKQGRQGERGEPG). 2 stretches are compositionally biased toward low complexity: residues 59–73 (PGTA…QPGT) and 148–164 (TPGL…MGPI). Over residues 179–190 (RGYDGKDGEPGR) the composition is skewed to basic and acidic residues. Over residues 194 to 203 (PGPIGQPGIP) the composition is skewed to low complexity. Positions 311–320 (SGPPGPPGPS) are enriched in pro residues. The span at 422-440 (SGSRGAQGPPGAPGSSGQN) shows a compositional bias: low complexity. A compositionally biased stretch (gly residues) spans 441 to 450 (GVDGGTGENG). 2 stretches are compositionally biased toward low complexity: residues 460–475 (ESGA…SAGP) and 508–518 (EPGPQGDQGPK). The 59-residue stretch at 513 to 571 (GDQGPKGQKGEVGPVGEKGDKGWTGTPGDPGPQGDRGEPGPPGRDGVDGPPGPRGAPGE) folds into the Collagen-like 2 domain. Positions 610 to 622 (PPGPPGPPGPPGQ) are enriched in pro residues. Residues 661–884 (ENVLKDLDEK…KLEIGPACFH (224 aa)) enclose the Fibrillar collagen NC1 domain. 2 disulfide bridges follow: C731/C882 and C793/C833.

This sequence belongs to the fibrillar collagen family. As to expression, component of the acid-insoluble organic matrix of the aragonitic skeleton (at protein level).

The protein resides in the secreted. The sequence is that of Collagen alpha chain from Acropora millepora (Staghorn coral).